The sequence spans 463 residues: Cysteine--tRNA ligase (463 aa).

Cys33 contributes to the Zn(2+) binding site. The 'HIGH' region motif lies at Pro35–Asn45. Zn(2+)-binding residues include Cys221, His246, and Glu250. A 'KMSKS' region motif is present at residues Lys279 to Ser283. Lys282 serves as a coordination point for ATP.

This sequence belongs to the class-I aminoacyl-tRNA synthetase family. As to quaternary structure, monomer. The cofactor is Zn(2+).

Its subcellular location is the cytoplasm. It carries out the reaction tRNA(Cys) + L-cysteine + ATP = L-cysteinyl-tRNA(Cys) + AMP + diphosphate. This Rhizobium rhizogenes (strain K84 / ATCC BAA-868) (Agrobacterium radiobacter) protein is Cysteine--tRNA ligase.